The chain runs to 1404 residues: DNA-directed RNA polymerase subunit beta' (1404 aa).

Positions 72, 74, 87, and 90 each coordinate Zn(2+). Positions 463, 465, and 467 each coordinate Mg(2+). Positions 811, 885, 892, and 895 each coordinate Zn(2+).

This sequence belongs to the RNA polymerase beta' chain family. As to quaternary structure, the RNAP catalytic core consists of 2 alpha, 1 beta, 1 beta' and 1 omega subunit. When a sigma factor is associated with the core the holoenzyme is formed, which can initiate transcription. Mg(2+) serves as cofactor. Zn(2+) is required as a cofactor.

It catalyses the reaction RNA(n) + a ribonucleoside 5'-triphosphate = RNA(n+1) + diphosphate. DNA-dependent RNA polymerase catalyzes the transcription of DNA into RNA using the four ribonucleoside triphosphates as substrates. This chain is DNA-directed RNA polymerase subunit beta', found in Jannaschia sp. (strain CCS1).